A 125-amino-acid polypeptide reads, in one-letter code: Small ribosomal subunit protein uS11 (125 aa).

The disordered stretch occupies residues 101–125 (KDVKDVTPTPHNGTRPPKKILKREK). Residues 116–125 (PPKKILKREK) show a composition bias toward basic residues.

This sequence belongs to the universal ribosomal protein uS11 family. As to quaternary structure, part of the 30S ribosomal subunit. Interacts with proteins S7 and S18. Binds to IF-3.

In terms of biological role, located on the platform of the 30S subunit, it bridges several disparate RNA helices of the 16S rRNA. Forms part of the Shine-Dalgarno cleft in the 70S ribosome. The chain is Small ribosomal subunit protein uS11 from Mycoplasma sp.